The sequence spans 719 residues: Protein lin-15A (719 aa).

Disordered stretches follow at residues 179–199, 419–464, 559–626, and 684–719; these read FSHF…EGSQ, YRDH…SISW, LTTA…PTKT, and AKQV…EPIF. The segment covering 570–579 has biased composition (low complexity); sequence STSTDSSSSS. The span at 604–617 shows a compositional bias: polar residues; that stretch reads LLQNKPTHVESSSP. Residues 693–719 show a composition bias toward basic and acidic residues; it reads EPKHIPPTHMEKKPEELLMDPKPEPIF.

It localises to the nucleus. Functionally, synthetic multivulva (synMuv) class A protein. SynMuv proteins are required to repress the induction of vulval development. Acts redundantly with SynMuv class B protein lin-15B, and lin-35 to negatively regulate vulval development, most likely through antagonization of the Ras-signaling pathway. May also negatively regulate vulval development in association with other SynMuv class B proteins such as dpl-1 and efl-1. Regulates let-23 basal activity. Required for the correct expression and/or stability of lin-56. This Caenorhabditis elegans protein is Protein lin-15A.